The sequence spans 238 residues: TIDTCSSDSPLSCQTDNEASCCFNSPGGSLLQTQFWDYDPSDGPSDSWTIHGLWPDNCDGSYQEYCDDSREYSNITSILEAQDRTELLSYMKEYWPDYEGADEDESFWEHEWNKHGTCINTIDPSCYTDYYAQEEVGDFFQQVVDLFKTLDSYTALSDAGITPSEDATYKLSDIEDALAAIHDGYPPYVGCEDGALSQLYYYFNVKGSAIGGTYVASERLEDSNCKGSGIKYPPKSSS.

5 disulfide bridges follow: Cys5–Cys22, Cys13–Cys58, Cys21–Cys126, Cys66–Cys118, and Cys191–Cys225. His51 is an active-site residue. N-linked (GlcNAc...) asparagine glycosylation occurs at Asn74. Catalysis depends on residues Glu111 and His115.

Belongs to the RNase T2 family.

The catalysed reaction is a ribonucleotidyl-ribonucleotide-RNA + H2O = a 3'-end 3'-phospho-ribonucleotide-RNA + a 5'-end dephospho-ribonucleoside-RNA + H(+). In terms of biological role, this is a base non-specific and adenylic acid preferential ribonuclease. This is Ribonuclease M from Aspergillus phoenicis (Aspergillus saitoi).